The sequence spans 274 residues: Methionine aminopeptidase B (274 aa).

His-102 is a binding site for substrate. Positions 120, 131, and 194 each coordinate a divalent metal cation. His-201 serves as a coordination point for substrate. A divalent metal cation-binding residues include Glu-227 and Glu-258.

This sequence belongs to the peptidase M24A family. Methionine aminopeptidase type 1 subfamily. As to quaternary structure, monomer. Co(2+) serves as cofactor. The cofactor is Zn(2+). Requires Mn(2+) as cofactor. Fe(2+) is required as a cofactor.

The enzyme catalyses Release of N-terminal amino acids, preferentially methionine, from peptides and arylamides.. In terms of biological role, removes the N-terminal methionine from nascent proteins. The N-terminal methionine is often cleaved when the second residue in the primary sequence is small and uncharged (Met-Ala-, Cys, Gly, Pro, Ser, Thr, or Val). Requires deformylation of the N(alpha)-formylated initiator methionine before it can be hydrolyzed. The polypeptide is Methionine aminopeptidase B (Synechocystis sp. (strain ATCC 27184 / PCC 6803 / Kazusa)).